The sequence spans 364 residues: D-alanine--D-alanine ligase (364 aa).

The 207-residue stretch at 146–352 (KLCAMNAGIA…FAELVEKLLL (207 aa)) folds into the ATP-grasp domain. 179–234 (TKRFDWPLFVKPASLGSSVGISKVRNAEELAAALENACGLDSKALVEAAISGREIE) contacts ATP. Asp305, Glu319, and Asn321 together coordinate Mg(2+).

The protein belongs to the D-alanine--D-alanine ligase family. Mg(2+) is required as a cofactor. It depends on Mn(2+) as a cofactor.

It is found in the cytoplasm. It carries out the reaction 2 D-alanine + ATP = D-alanyl-D-alanine + ADP + phosphate + H(+). It participates in cell wall biogenesis; peptidoglycan biosynthesis. Its function is as follows. Cell wall formation. In Chlorobaculum tepidum (strain ATCC 49652 / DSM 12025 / NBRC 103806 / TLS) (Chlorobium tepidum), this protein is D-alanine--D-alanine ligase.